The sequence spans 123 residues: Small ribosomal subunit protein uS12 (123 aa).

Asp89 bears the 3-methylthioaspartic acid mark.

Belongs to the universal ribosomal protein uS12 family. In terms of assembly, part of the 30S ribosomal subunit. Contacts proteins S8 and S17. May interact with IF1 in the 30S initiation complex.

With S4 and S5 plays an important role in translational accuracy. Functionally, interacts with and stabilizes bases of the 16S rRNA that are involved in tRNA selection in the A site and with the mRNA backbone. Located at the interface of the 30S and 50S subunits, it traverses the body of the 30S subunit contacting proteins on the other side and probably holding the rRNA structure together. The combined cluster of proteins S8, S12 and S17 appears to hold together the shoulder and platform of the 30S subunit. The chain is Small ribosomal subunit protein uS12 from Afipia carboxidovorans (strain ATCC 49405 / DSM 1227 / KCTC 32145 / OM5) (Oligotropha carboxidovorans).